A 1134-amino-acid chain; its full sequence is Protocadherin-18 (1134 aa).

An N-terminal signal peptide occupies residues 1–27 (MYQMNAKMHFTFVFALLVVSFNLDVLG). 6 Cadherin domains span residues 28–137 (KNLK…SPQF), 138–246 (SRSL…SPAF), 247–354 (EQQS…KPEI), 361–465 (PGKE…PPHF), 466–576 (QRSR…VPVV), and 582–697 (RNNT…APLD). At 28–699 (KNLKYRIYEE…SVSQAPLDVS (672 aa)) the chain is on the extracellular side. Asn-103 carries N-linked (GlcNAc...) asparagine glycosylation. N-linked (GlcNAc...) asparagine glycosylation occurs at Asn-269. Asn-559 carries N-linked (GlcNAc...) asparagine glycosylation. Residues 700–720 (MIIIISLGAICAVLLVIMVLF) form a helical membrane-spanning segment. At 721 to 1134 (ATRCNREKKD…NKLLQDVRQS (414 aa)) the chain is on the cytoplasmic side. Disordered regions lie at residues 768–800 (TLPIRSHHRSSPSSSPTLERGQMGSRQSHNSHQ), 868–888 (SLKDSGRGDSEAGDSDYDLGR), and 941–1003 (DYRS…TSSL). Positions 791-800 (GSRQSHNSHQ) are enriched in polar residues. A compositionally biased stretch (basic and acidic residues) spans 868–877 (SLKDSGRGDS). The interval 892-1134 (IDRLLGEGFS…NKLLQDVRQS (243 aa)) is interaction with DAB1.

Interacts with DAB1.

The protein localises to the cell membrane. Functionally, potential calcium-dependent cell-adhesion protein. This chain is Protocadherin-18 (PCDH18), found in Bos taurus (Bovine).